The following is a 321-amino-acid chain: PIH1 domain-containing protein 2 (321 aa).

This sequence belongs to the PIH1 family.

The sequence is that of PIH1 domain-containing protein 2 (pih1d2) from Xenopus tropicalis (Western clawed frog).